An 885-amino-acid polypeptide reads, in one-letter code: Initiator protein NS1 (885 aa).

The tract at residues 404–477 (AEAGPSGTQP…GREDIFSGAP (74 aa)) is disordered. Polar residues predominate over residues 409-423 (SGTQPVETAQQSPPT). Residues 452–465 (QAAGGSEMGAGGSA) show a composition bias toward gly residues.

Belongs to the parvoviruses initiator protein NS1 family. In terms of assembly, homooligomer. The cofactor is Mg(2+).

It is found in the host nucleus. The catalysed reaction is ATP + H2O = ADP + phosphate + H(+). Its function is as follows. Multifunctional protein which displays endonuclease and helicase activities required for initiating and directing viral DNA replication. Also plays a role in viral packaging and transactivation of several promoters. Binds site-specifically to 2-3 approximate tandem copies within the origins of replication (Ori), unwinds this hairpin region and nicks one DNA strand thereby initiating the rolling circle replication (RCR). This is Initiator protein NS1 from Bombyx mori densovirus (BmDNV).